Here is a 300-residue protein sequence, read N- to C-terminus: Transcriptional dual regulator GltC (300 aa).

The HTH lysR-type domain occupies 1–58 (MELRQLRYFMEVAEREHVSEAADHLHVAQSAISRQIANLEEELNVTLFEREGRNIKLT). Positions 18-37 (VSEAADHLHVAQSAISRQIA) form a DNA-binding region, H-T-H motif.

This sequence belongs to the LysR transcriptional regulatory family. Interacts with gutamate dehydrogenase RocG.

Its activity is regulated as follows. Activated by alpha-ketoglutarate and inhibited by glutamate and by RocG. In terms of biological role, positive regulator of glutamate biosynthesis (gltAB genes). Negatively regulates its own expression. The polypeptide is Transcriptional dual regulator GltC (gltC) (Bacillus subtilis (strain 168)).